Reading from the N-terminus, the 250-residue chain is MIDLNADLGEGFGRWELTDDERLLSVVTSANVACGFHAGDAATMRRVCELAAERGVRIGAQVSYRDLAGFGRRAMDVPPAELAAEVAYQIGALEVFARAAGTRVSYVKPHGALYNRVVHDEGQAGAVVDGVRLADASLPVLGLPGSRLLEVAEKAGLPVVTEAFADRAYTEEGTLVPRGEDGAVVTDPDAVVERSVNLARLGVVDAHSGRRIPVRARSLCLHGDTPGAVELARRVRSRLEASGVRVAAFA.

The protein belongs to the LamB/PxpA family. In terms of assembly, forms a complex composed of PxpA, PxpB and PxpC.

It carries out the reaction 5-oxo-L-proline + ATP + 2 H2O = L-glutamate + ADP + phosphate + H(+). Its function is as follows. Catalyzes the cleavage of 5-oxoproline to form L-glutamate coupled to the hydrolysis of ATP to ADP and inorganic phosphate. This Streptomyces avermitilis (strain ATCC 31267 / DSM 46492 / JCM 5070 / NBRC 14893 / NCIMB 12804 / NRRL 8165 / MA-4680) protein is 5-oxoprolinase subunit A.